The sequence spans 84 residues: Putative membrane protein insertion efficiency factor (84 aa).

This sequence belongs to the UPF0161 family.

Its subcellular location is the cell inner membrane. Functionally, could be involved in insertion of integral membrane proteins into the membrane. In Shewanella oneidensis (strain ATCC 700550 / JCM 31522 / CIP 106686 / LMG 19005 / NCIMB 14063 / MR-1), this protein is Putative membrane protein insertion efficiency factor.